A 129-amino-acid polypeptide reads, in one-letter code: Small ribosomal subunit protein uS11 (129 aa).

It belongs to the universal ribosomal protein uS11 family. Part of the 30S ribosomal subunit. Interacts with proteins S7 and S18. Binds to IF-3.

Functionally, located on the platform of the 30S subunit, it bridges several disparate RNA helices of the 16S rRNA. Forms part of the Shine-Dalgarno cleft in the 70S ribosome. The chain is Small ribosomal subunit protein uS11 from Lactobacillus delbrueckii subsp. bulgaricus (strain ATCC 11842 / DSM 20081 / BCRC 10696 / JCM 1002 / NBRC 13953 / NCIMB 11778 / NCTC 12712 / WDCM 00102 / Lb 14).